The following is a 250-amino-acid chain: uncharacterized protein (250 aa).

Positions Leu7–Lys244 constitute an ABC transporter domain. Gly39 to Ser46 is an ATP binding site.

The protein belongs to the ABC transporter superfamily.

This is an uncharacterized protein from Methanocaldococcus jannaschii (strain ATCC 43067 / DSM 2661 / JAL-1 / JCM 10045 / NBRC 100440) (Methanococcus jannaschii).